A 243-amino-acid chain; its full sequence is Orotidine 5'-phosphate decarboxylase (243 aa).

Substrate is bound by residues aspartate 19, lysine 41, 69-78 (DLKFFDIPAT), threonine 124, arginine 185, glutamine 194, glycine 214, and arginine 215. The Proton donor role is filled by lysine 71.

Belongs to the OMP decarboxylase family. Type 1 subfamily. In terms of assembly, homodimer.

It carries out the reaction orotidine 5'-phosphate + H(+) = UMP + CO2. It participates in pyrimidine metabolism; UMP biosynthesis via de novo pathway; UMP from orotate: step 2/2. Functionally, catalyzes the decarboxylation of orotidine 5'-monophosphate (OMP) to uridine 5'-monophosphate (UMP). The polypeptide is Orotidine 5'-phosphate decarboxylase (Xanthomonas oryzae pv. oryzae (strain MAFF 311018)).